The following is a 308-amino-acid chain: GTPase Era (308 aa).

The Era-type G domain occupies 7–181; the sequence is RCGWVALIGP…LRLIVGYMPE (175 aa). The G1 stretch occupies residues 15 to 22; that stretch reads GPPNAGKS. GTP is bound at residue 15-22; that stretch reads GPPNAGKS. Residues 41 to 45 form a G2 region; the sequence is QTTRN. The segment at 62 to 65 is G3; sequence DTPG. Residues 62 to 66 and 130 to 133 each bind GTP; these read DTPGI and NKID. The segment at 130–133 is G4; it reads NKID. The segment at 160 to 162 is G5; that stretch reads ASA. The KH type-2 domain maps to 212–290; it reads LRQELPYSTA…HLELWVKVRE (79 aa).

The protein belongs to the TRAFAC class TrmE-Era-EngA-EngB-Septin-like GTPase superfamily. Era GTPase family. As to quaternary structure, monomer.

It localises to the cytoplasm. The protein resides in the cell inner membrane. An essential GTPase that binds both GDP and GTP, with rapid nucleotide exchange. Plays a role in 16S rRNA processing and 30S ribosomal subunit biogenesis and possibly also in cell cycle regulation and energy metabolism. This is GTPase Era from Nitratidesulfovibrio vulgaris (strain DP4) (Desulfovibrio vulgaris).